A 362-amino-acid polypeptide reads, in one-letter code: Putative F-box protein At3g23260 (362 aa).

The region spanning 1 to 46 (MEWRSLPVELQEEILSRVPAKYLARLRSTSKQWNALSKTGSFAKKH) is the F-box domain.

In Arabidopsis thaliana (Mouse-ear cress), this protein is Putative F-box protein At3g23260.